We begin with the raw amino-acid sequence, 1237 residues long: MEQRQYILDLVRRELTDTPQTQDLQKLTERIISLEKTITQLGTLLLGPNSTTAHEVSSLATAMQKVLYYNRAKAAISDFIMAIPRYPLYSYYGNDDIDDYHLAVVNRKPILPQFRYLGLMFGKPATGIQPYNFEVSFNLSKVEQTLISELAPTESQVIEDMRRDSTMLLKAEGRYDKSLNVFTVLITIITSNKLIYSQRLNIPGHRVASFELMIIANAVHTTVFEPAKVTKLPSCELGTSSIMSTTFEIRVQDMSTLPSPAFHARTIQSIKKTWRNADFSTGQLSAEDATYEPKMSGAEDVVIPHVYGLAESCEILTISDVYESVYNFESLCYCYSKKSGMEMAVRMMMLALELMRDDYKQVNSIYDVDHQTSESVGILAGITEGLLANAKAIALLVKHAVLSEELQINLNSIEQSYSRLVPLVPIYVTFDHVGTYSKGDAPIRDEPFSLTGLQLPMFAEGLSNSTIKTKFKSTWSVEPNVFGADHTIDCYESDDFIVLLKPKFAYWDHRYSHQPVSAVSYSDRGKSRTSYVLDCASSYNEESSLGYTSLFLAGRKAASPCALVNIPLNRSVKFESVSFLITSKRSVLPISGENLFGEIDMYIGRVRGTLNCNKFTSTEYIDRDGYKRYGLIGKCTGGSLLNASLSPLWVRLFCGGHKNADQIRFIGFSRTPVVGTLSGESLEVYPMPGSIGSSGTLSQSGRMSIYNDVTSLEVTLSVRHEASLETANVYAQSEIPGAALSTEIRDYIRQQNLYYSDLGLREEEAMIQGAVVMRTTFRGKLYVTKGTDSIPQSVYVWNTQLNDLAVAVKMTADLANAAEIRSKENQFRLNEMEQAVREIENQLLLSGIIDGLAALTGPATPVVKKAASLVFGAMKNMSRSGFRILAAGLTNSYFKTVMTHFLGTRKGVEVWRGLGSACAESSVMIKMSGKTKPIVKEGSTDLFLADKNFILADPIEFAKHNISTKYGGNVEQIGNVVSDSERLAVGGDLGSHVVTVFHRPLSILPEPLRTLLFKLSTSGLSKRDLSAREAWIRQTLHPTHSYATISYDYVLPKTGGNRRVLCFAGVGDPNPYNLPTGDKNVGIGSYMVEFDIIGLDKDTGVKVMRPVPWKQCGYTEEQVWSIYKTLGKEYRKVELKPYTVEDAWRVIAKSSHKRVLSDKAIISTPISYERQRAIEYMLSSHGFDYNLVLNNCQDFTRGLFDYARGGPVPDFIENDVRIAMIHSTSRHFAEVCSWVGV.

In terms of domain architecture, PPPDE spans 1006–1222; sequence EPLRTLLFKL…ENDVRIAMIH (217 aa). Residues histidine 1040 and cysteine 1192 contribute to the active site.

The protein resides in the virion. This Rice ragged stunt virus (isolate Thailand) (RRSV) protein is Structural protein VP1.